The primary structure comprises 121 residues: Small ribosomal subunit protein uS13 (121 aa).

The tract at residues 91–121 (HRRGLPVRGQNTKNNARTRKGPRKTVANKKK) is disordered. Basic residues predominate over residues 106–121 (ARTRKGPRKTVANKKK).

This sequence belongs to the universal ribosomal protein uS13 family. Part of the 30S ribosomal subunit. Forms a loose heterodimer with protein S19. Forms two bridges to the 50S subunit in the 70S ribosome.

Functionally, located at the top of the head of the 30S subunit, it contacts several helices of the 16S rRNA. In the 70S ribosome it contacts the 23S rRNA (bridge B1a) and protein L5 of the 50S subunit (bridge B1b), connecting the 2 subunits; these bridges are implicated in subunit movement. Contacts the tRNAs in the A and P-sites. The sequence is that of Small ribosomal subunit protein uS13 from Lysinibacillus sphaericus (strain C3-41).